The following is a 284-amino-acid chain: Tropomyosin beta chain (284 aa).

M1 is modified (N-acetylmethionine). The tract at residues 1–78 is disordered; it reads MDAIKKKMQM…EKLEQAEKKA (78 aa). Residues 1-284 are a coiled coil; it reads MDAIKKKMQM…DNALNDITSL (284 aa). Basic and acidic residues-rich tracts occupy residues 12–40 and 51–78; these read KLDKENAIDRAEQAEADKKQAEDRCKQLE and KGTEDEVEKYSESVKDAQEKLEQAEKKA. At T53 the chain carries Phosphothreonine. S61 carries the phosphoserine; by PIK3CG modification. Residue T79 is modified to Phosphothreonine. Phosphoserine is present on S87. The residue at position 108 (T108) is a Phosphothreonine. A disordered region spans residues 117 to 136; that stretch reads EKAADESERGMKVIENRAMK. A phosphoserine mark is found at S158, S206, and S215. Phosphothreonine is present on T252. Phosphotyrosine is present on Y261. S271 is modified (phosphoserine). Residue T282 is modified to Phosphothreonine. Position 283 is a phosphoserine (S283).

It belongs to the tropomyosin family. In terms of assembly, homodimer. Heterodimer of an alpha (TPM1, TPM3 or TPM4) and a beta (TPM2) chain. In terms of processing, phosphorylated on Ser-61 by PIK3CG. Phosphorylation on Ser-61 is required for ADRB2 internalization.

Its subcellular location is the cytoplasm. It is found in the cytoskeleton. In terms of biological role, binds to actin filaments in muscle and non-muscle cells. Plays a central role, in association with the troponin complex, in the calcium dependent regulation of vertebrate striated muscle contraction. Smooth muscle contraction is regulated by interaction with caldesmon. In non-muscle cells is implicated in stabilizing cytoskeleton actin filaments. The non-muscle isoform may have a role in agonist-mediated receptor internalization. The protein is Tropomyosin beta chain (Tpm2) of Mus musculus (Mouse).